The following is a 411-amino-acid chain: Meiotic driver wtf33 (411 aa).

The tract at residues 1 to 95 (MKNKYYPLRS…ENHSSGTADN (95 aa)) is disordered. A compositionally biased stretch (basic and acidic residues) spans 11-29 (SMDELSTKNDNEIDLEKGP). Positions 57–72 (GANNPNLFNTDESTTP) are enriched in polar residues. The next 6 membrane-spanning stretches (helical) occupy residues 104–124 (AILS…YLTY), 137–157 (WVYF…LWCF), 244–264 (EMMI…FGCV), 281–301 (TISA…WTLW), 303–323 (ALSG…LVNG), and 336–356 (GYEI…LYEM).

This sequence belongs to the WTF family. Homomer. Forms protein aggregates. The two isoforms can interact with each other and with themselves. High sequence similarity is required for their interaction.

Its subcellular location is the spore membrane. The protein localises to the vacuole membrane. It is found in the ascus epiplasm. It localises to the cytoplasm. The protein resides in the endoplasmic reticulum membrane. Promotes unequal transmission of alleles from the parental zygote to progeny spores by acting as poison/antidote system where the poison and antidote proteins are produced from the same locus; the poison component is trans-acting and targets all spores within an ascus whereas the antidote component is spore-specific, leading to poisoning of all progeny that do not inherit the allele. Functionally, localizes isoform 2 to the vacuole thereby facilitating its degradation. Its function is as follows. Forms toxic aggregates that disrupt spore maturation. The protein is Meiotic driver wtf33 of Schizosaccharomyces kambucha (Fission yeast).